Here is a 205-residue protein sequence, read N- to C-terminus: Glycerol-3-phosphate acyltransferase (205 aa).

The next 5 helical transmembrane spans lie at 3–23, 53–73, 80–100, 112–132, and 138–158; these read VFALGMILFAYLCGSLSSAIL, GVAATVLVFDVLKGMLPVWLA, PFYLGLTAIAACLGHIYPVFF, LGAIAPIGWDLTGLMTGTWLL, and GYSSLGAIVSALIAPFYVWWF.

The protein belongs to the PlsY family. Probably interacts with PlsX.

The protein resides in the cell inner membrane. The catalysed reaction is an acyl phosphate + sn-glycerol 3-phosphate = a 1-acyl-sn-glycero-3-phosphate + phosphate. Its pathway is lipid metabolism; phospholipid metabolism. In terms of biological role, catalyzes the transfer of an acyl group from acyl-phosphate (acyl-PO(4)) to glycerol-3-phosphate (G3P) to form lysophosphatidic acid (LPA). This enzyme utilizes acyl-phosphate as fatty acyl donor, but not acyl-CoA or acyl-ACP. This Erwinia tasmaniensis (strain DSM 17950 / CFBP 7177 / CIP 109463 / NCPPB 4357 / Et1/99) protein is Glycerol-3-phosphate acyltransferase.